The primary structure comprises 445 residues: Tubulin beta-2 chain (445 aa).

GTP contacts are provided by Q12, E73, S142, G146, T147, G148, N208, and N230. Residue E73 coordinates Mg(2+).

Belongs to the tubulin family. In terms of assembly, dimer of alpha and beta chains. A typical microtubule is a hollow water-filled tube with an outer diameter of 25 nm and an inner diameter of 15 nM. Alpha-beta heterodimers associate head-to-tail to form protofilaments running lengthwise along the microtubule wall with the beta-tubulin subunit facing the microtubule plus end conferring a structural polarity. Microtubules usually have 13 protofilaments but different protofilament numbers can be found in some organisms and specialized cells. Mg(2+) serves as cofactor.

It is found in the cytoplasm. Its subcellular location is the cytoskeleton. Its function is as follows. Tubulin is the major constituent of microtubules, a cylinder consisting of laterally associated linear protofilaments composed of alpha- and beta-tubulin heterodimers. Microtubules grow by the addition of GTP-tubulin dimers to the microtubule end, where a stabilizing cap forms. Below the cap, tubulin dimers are in GDP-bound state, owing to GTPase activity of alpha-tubulin. The protein is Tubulin beta-2 chain (TUBB2) of Suillus bovinus (Jersey cow bolete).